The chain runs to 324 residues: MATATSGTGKTKVAVIGSGNIGTDLMIKILRTSEVLEIAAMVGIDAESDGLARARRLKVATTHEGIDGLLRMPEFDDIEIVFDATSAGAHARNDELLRARGRRVIDLTPAAIGPYVVPPVNLDAHLDAPNINMVTCGGQATIPIVAAVNAVTPVAYAEIVASIASKSAGPGTRANIDEFTETTASAIEKVGGAARGKAIIVLNPAEPPLVMRDTVYCLIGASDQATQDAVVASVTRMVDRVREYVPGYRLKQQVQIEEASADDPLRQLAPDGSEPAKVTVFLEVTGAAHYLPAYAGNLDIMTSAALRAGERLAQTLTQREGATA.

Ser18–Ile21 is an NAD(+) binding site. Residue Cys136 is the Acyl-thioester intermediate of the active site. NAD(+)-binding positions include Ser167–Asn175 and Asn297.

This sequence belongs to the acetaldehyde dehydrogenase family.

It catalyses the reaction acetaldehyde + NAD(+) + CoA = acetyl-CoA + NADH + H(+). The protein is Acetaldehyde dehydrogenase 1 of Parafrankia sp. (strain EAN1pec).